Reading from the N-terminus, the 155-residue chain is S-ribosylhomocysteine lyase (155 aa).

Positions 57, 61, and 124 each coordinate Fe cation.

The protein belongs to the LuxS family. As to quaternary structure, homodimer. Fe cation is required as a cofactor.

The catalysed reaction is S-(5-deoxy-D-ribos-5-yl)-L-homocysteine = (S)-4,5-dihydroxypentane-2,3-dione + L-homocysteine. Its function is as follows. Involved in the synthesis of autoinducer 2 (AI-2) which is secreted by bacteria and is used to communicate both the cell density and the metabolic potential of the environment. The regulation of gene expression in response to changes in cell density is called quorum sensing. Catalyzes the transformation of S-ribosylhomocysteine (RHC) to homocysteine (HC) and 4,5-dihydroxy-2,3-pentadione (DPD). This is S-ribosylhomocysteine lyase from Listeria monocytogenes serotype 4b (strain CLIP80459).